The primary structure comprises 285 residues: Probable endonuclease 4 (285 aa).

Zn(2+) is bound by residues His-69, His-109, Glu-145, Asp-179, His-182, His-216, Asp-229, His-231, and Glu-261.

The protein belongs to the AP endonuclease 2 family. Zn(2+) serves as cofactor.

It catalyses the reaction Endonucleolytic cleavage to 5'-phosphooligonucleotide end-products.. In terms of biological role, endonuclease IV plays a role in DNA repair. It cleaves phosphodiester bonds at apurinic or apyrimidinic (AP) sites, generating a 3'-hydroxyl group and a 5'-terminal sugar phosphate. This chain is Probable endonuclease 4, found in Salmonella schwarzengrund (strain CVM19633).